A 328-amino-acid polypeptide reads, in one-letter code: UPF0421 protein SSP0904 (328 aa).

The next 4 helical transmembrane spans lie at 26–46, 61–81, 84–104, and 132–152; these read LFCLALNLNPIFAILTAIVTI, LPATIIGALFAVIFTFIFGDQ, FAYALSATFTIILCTKLNLHV, and LLTAIIGLVTAGLVNFIILPP.

It belongs to the UPF0421 family.

It is found in the cell membrane. In Staphylococcus saprophyticus subsp. saprophyticus (strain ATCC 15305 / DSM 20229 / NCIMB 8711 / NCTC 7292 / S-41), this protein is UPF0421 protein SSP0904.